The sequence spans 92 residues: Protein canopy homolog 1 (92 aa).

This sequence belongs to the canopy family.

In Homo sapiens (Human), this protein is Protein canopy homolog 1 (CNPY1).